Here is a 409-residue protein sequence, read N- to C-terminus: Serine/threonine transporter SstT (409 aa).

9 consecutive transmembrane segments (helical) span residues 17–37 (LVVQIIVGLVAGLLLASFFPA), 49–69 (FVSALKAVAPVLVFVLVMASI), 83–103 (ILLLYLVGTFSAAVVAVIASF), 142–162 (ALISANFIGILAWAIGLGIAF), 180–200 (VSLIVKVVIRFAPLGIFGLVA), 218–238 (LVVLLGCMLFVAFVVNPLIVF), 299–319 (MAGAAITITVLTLAAVHTLGI), 331–351 (VVASVCACGASGVAGGSLLLI), and 357–377 (LFGIPSEVAMQVVAVGFIIAI).

It belongs to the dicarboxylate/amino acid:cation symporter (DAACS) (TC 2.A.23) family.

The protein resides in the cell inner membrane. The enzyme catalyses L-serine(in) + Na(+)(in) = L-serine(out) + Na(+)(out). It catalyses the reaction L-threonine(in) + Na(+)(in) = L-threonine(out) + Na(+)(out). Functionally, involved in the import of serine and threonine into the cell, with the concomitant import of sodium (symport system). In Pseudomonas paraeruginosa (strain DSM 24068 / PA7) (Pseudomonas aeruginosa (strain PA7)), this protein is Serine/threonine transporter SstT.